Consider the following 278-residue polypeptide: MDIKAYFELIRLKNCLTASFGAFIGGLIASYFNLAMVDNLILASIVVFLVCGFGNALNDIYDLKIDRINKPKRPIPSKRITLNNAKVFSYSLVVMGLFISLFNISCFLMAVLNSIVLQQYASTYKKNKIIGNLIVAYLTGSVFIFGGIAVGNIDVTIMLFLCALFAMWSREIIKDYEDIEGDLKEKVISIPIKCGERSIYIAAFLLIFAIFLSPLPYLFGFFGIYYMISVVFCDLLFLFGIYKLVFNPSKMEAKKASRNIKIVTNLVLIAFLIGSLFK.

Transmembrane regions (helical) follow at residues 12–32 (LKNC…ASYF), 34–54 (LAMV…CGFG), 92–112 (LVVM…MAVL), 129–149 (IIGN…GGIA), 153–173 (IDVT…REII), 204–224 (FLLI…FFGI), 226–246 (YMIS…KLVF), and 257–277 (SRNI…GSLF).

It belongs to the UbiA prenyltransferase family. DGGGP synthase subfamily. It depends on Mg(2+) as a cofactor.

The protein localises to the cell membrane. It carries out the reaction sn-3-O-(geranylgeranyl)glycerol 1-phosphate + (2E,6E,10E)-geranylgeranyl diphosphate = 2,3-bis-O-(geranylgeranyl)-sn-glycerol 1-phosphate + diphosphate. It functions in the pathway membrane lipid metabolism; glycerophospholipid metabolism. Functionally, prenyltransferase that catalyzes the transfer of the geranylgeranyl moiety of geranylgeranyl diphosphate (GGPP) to the C2 hydroxyl of (S)-3-O-geranylgeranylglyceryl phosphate (GGGP). This reaction is the second ether-bond-formation step in the biosynthesis of archaeal membrane lipids. This chain is Digeranylgeranylglyceryl phosphate synthase, found in Methanococcus maripaludis (strain DSM 14266 / JCM 13030 / NBRC 101832 / S2 / LL).